Here is a 613-residue protein sequence, read N- to C-terminus: Sulfhydryl oxidase 1 (613 aa).

The signal sequence occupies residues methionine 1–alanine 30. Residues tyrosine 37 to serine 157 form the Thioredoxin domain. Active-site nucleophile residues include cysteine 71 and cysteine 74. 2 disulfide bridges follow: cysteine 71–cysteine 74 and cysteine 102–cysteine 111. Asparagine 131 and asparagine 244 each carry an N-linked (GlcNAc...) asparagine glycan. A disulfide bridge connects residues cysteine 394 and cysteine 406. An ERV/ALR sulfhydryl oxidase domain is found at serine 397–tryptophan 504. FAD-binding residues include arginine 402, tryptophan 409, and histidine 413. At serine 427 the chain carries Phosphoserine. The cysteines at positions 450 and 453 are disulfide-linked. Residues aspartate 452, histidine 456, tryptophan 479 to asparagine 486, lysine 501, and tryptophan 504 contribute to the FAD site. A disulfide bond links cysteine 510 and cysteine 513.

It belongs to the quiescin-sulfhydryl oxidase (QSOX) family. In terms of assembly, monomer. FAD is required as a cofactor. Post-translationally, N-glycosylated. O-glycosylated on Thr and Ser residues. In terms of tissue distribution, detected in endometrium and in uterus glandular epithelial cells (at protein level). Expressed in testis, placenta, pancreas, lung, ovary, endometrium, but not in brain, liver and kidney tissues. Higher expression in epithelial cells.

The protein localises to the secreted. It catalyses the reaction 2 R'C(R)SH + O2 = R'C(R)S-S(R)CR' + H2O2. In terms of biological role, catalyzes the oxidation of sulfhydryl groups in peptide and protein thiols to disulfides with the reduction of oxygen to hydrogen peroxide. Plays a role in disulfide bond formation in a variety of extracellular proteins. In fibroblasts, required for normal incorporation of laminin into the extracellular matrix, and thereby for normal cell-cell adhesion and cell migration. This chain is Sulfhydryl oxidase 1 (QSOX1), found in Cavia porcellus (Guinea pig).